Consider the following 290-residue polypeptide: MTSTKEIKNKIVSVTNTKKITKAMEMVAVSKMRKTEERMRSGRPYSDIIRKVIDHVTQGNLEYKHSYLEERKTNRIGMIIISTDRGLCGGLNTNLFKQVLFKIQNFAKVNIPCDLILFGLKSLSVFKLCGSNILAKATNLGENPKLEELINSVGIILQEYQCKRIDKIFIAYNKFHNKMSQYPTITQLLPFSKKNDQDASNNNWDYLYEPESKLILDTLFNRYIESQVYQSILENIASEHAARMIAMKTATDNSGNRIKELQLVYNKVRQANITQELNEIVSGASAVSID.

This sequence belongs to the ATPase gamma chain family. As to quaternary structure, F-type ATPases have 2 components, CF(1) - the catalytic core - and CF(0) - the membrane proton channel. CF(1) has five subunits: alpha(3), beta(3), gamma(1), delta(1), epsilon(1). CF(0) has three main subunits: a, b and c.

The protein localises to the cell inner membrane. Functionally, produces ATP from ADP in the presence of a proton gradient across the membrane. The gamma chain is believed to be important in regulating ATPase activity and the flow of protons through the CF(0) complex. The chain is ATP synthase gamma chain from Buchnera aphidicola subsp. Acyrthosiphon pisum (strain APS) (Acyrthosiphon pisum symbiotic bacterium).